A 126-amino-acid polypeptide reads, in one-letter code: Hydrogenase maturation factor HypA (126 aa).

Residue His2 coordinates Ni(2+). Zn(2+)-binding residues include Cys78, Cys81, Cys97, and Cys100.

Belongs to the HypA/HybF family.

Functionally, involved in the maturation of [NiFe] hydrogenases. Required for nickel insertion into the metal center of the hydrogenase. The polypeptide is Hydrogenase maturation factor HypA (Methanococcus maripaludis (strain C5 / ATCC BAA-1333)).